A 347-amino-acid polypeptide reads, in one-letter code: NADH-ubiquinone oxidoreductase chain 2 (347 aa).

10 helical membrane passes run 1 to 21 (MNPL…TIVM), 25 to 45 (HWLV…PVLM), 59 to 79 (YFLT…INLI), 96 to 116 (IIMT…FWVP), 122 to 142 (IQLS…ISIL), 150 to 170 (NLNL…WGGL), 201 to 221 (ALLN…VFML), 242 to 262 (TALL…GFLP), 274 to 294 (NSVI…YFYM), and 326 to 346 (LSPL…LTLL).

It belongs to the complex I subunit 2 family. As to quaternary structure, core subunit of respiratory chain NADH dehydrogenase (Complex I) which is composed of 45 different subunits. Interacts with TMEM242.

The protein resides in the mitochondrion inner membrane. It catalyses the reaction a ubiquinone + NADH + 5 H(+)(in) = a ubiquinol + NAD(+) + 4 H(+)(out). Its function is as follows. Core subunit of the mitochondrial membrane respiratory chain NADH dehydrogenase (Complex I) which catalyzes electron transfer from NADH through the respiratory chain, using ubiquinone as an electron acceptor. Essential for the catalytic activity and assembly of complex I. This Eidolon helvum (Straw-colored fruit bat) protein is NADH-ubiquinone oxidoreductase chain 2.